The sequence spans 271 residues: MTYLQESSRPAVTVPKLQAMRDAGEKIAMLTCYDASFAALLDRAGTDVLLIGDSLGNVLQGHATTLPVSLDDIAYHTACVARAQPRALVVADLPFGTYGTPADAFANAVELMRAGAQMVKLEGGEWLAETIRFLVERSVPVCAHLGLTPQSVHAFGGFKVQGKTEAGAAQLLRDARAIEAAGAQLVVLEAVPTLVASEVTHMLKIPTIGIGAGADCSGQVLVLHDMLGIYPGKRPRFVKDFMQGQPNIEAAVDAYVKAVKDGSFPGPEHSF.

Mg(2+)-binding residues include aspartate 53 and aspartate 92. Residues 53–54 (DS), aspartate 92, and lysine 120 each bind 3-methyl-2-oxobutanoate. A Mg(2+)-binding site is contributed by glutamate 122. Glutamate 189 (proton acceptor) is an active-site residue.

It belongs to the PanB family. Homodecamer; pentamer of dimers. Mg(2+) is required as a cofactor.

The protein localises to the cytoplasm. It catalyses the reaction 3-methyl-2-oxobutanoate + (6R)-5,10-methylene-5,6,7,8-tetrahydrofolate + H2O = 2-dehydropantoate + (6S)-5,6,7,8-tetrahydrofolate. It participates in cofactor biosynthesis; (R)-pantothenate biosynthesis; (R)-pantoate from 3-methyl-2-oxobutanoate: step 1/2. In terms of biological role, catalyzes the reversible reaction in which hydroxymethyl group from 5,10-methylenetetrahydrofolate is transferred onto alpha-ketoisovalerate to form ketopantoate. In Burkholderia multivorans (strain ATCC 17616 / 249), this protein is 3-methyl-2-oxobutanoate hydroxymethyltransferase.